The sequence spans 206 residues: Transcription factor MYB57 (206 aa).

Residues 1 to 11 are compositionally biased toward basic residues; that stretch reads METTMKKKGRV. Positions 1-20 are disordered; sequence METTMKKKGRVKATITSQKE. 2 HTH myb-type domains span residues 22-74 and 75-129; these read EGTV…LNYL and RPDV…QRHM. 2 DNA-binding regions (H-T-H motif) span residues 50–74 and 102–125; these read WNSV…LNYL and WSKI…RTKI. Residues 138–162 are disordered; sequence NHQHHCSGNSQSSGMTTQGSSGKAI. Low complexity predominate over residues 144–159; it reads SGNSQSSGMTTQGSSG.

As to expression, expressed specifically in flowers.

Its subcellular location is the nucleus. Transcription factor acting redundantly with MYB21 and MYB24 to control stamen filament elongation in the late developed flowers. Repressed at the transcript levels by DELLA proteins. This Arabidopsis thaliana (Mouse-ear cress) protein is Transcription factor MYB57 (MYB57).